The primary structure comprises 467 residues: Uronate isomerase (467 aa).

The protein belongs to the metallo-dependent hydrolases superfamily. Uronate isomerase family.

The enzyme catalyses D-glucuronate = D-fructuronate. It catalyses the reaction aldehydo-D-galacturonate = keto-D-tagaturonate. It functions in the pathway carbohydrate metabolism; pentose and glucuronate interconversion. This Staphylococcus haemolyticus (strain JCSC1435) protein is Uronate isomerase.